Reading from the N-terminus, the 77-residue chain is Translation initiation factor IF-1, chloroplastic (77 aa).

The 71-residue stretch at 1–71 (MKEQKWIHEG…TRGRIIYRLR (71 aa)) folds into the S1-like domain.

Belongs to the IF-1 family. As to quaternary structure, component of the 30S ribosomal translation pre-initiation complex which assembles on the 30S ribosome in the order IF-2 and IF-3, IF-1 and N-formylmethionyl-tRNA(fMet); mRNA recruitment can occur at any time during PIC assembly.

The protein resides in the plastid. It localises to the chloroplast. In terms of biological role, one of the essential components for the initiation of protein synthesis. Stabilizes the binding of IF-2 and IF-3 on the 30S subunit to which N-formylmethionyl-tRNA(fMet) subsequently binds. Helps modulate mRNA selection, yielding the 30S pre-initiation complex (PIC). Upon addition of the 50S ribosomal subunit IF-1, IF-2 and IF-3 are released leaving the mature 70S translation initiation complex. This is Translation initiation factor IF-1, chloroplastic from Montinia caryophyllacea (Wild clove bush).